The chain runs to 4468 residues: Replicase polyprotein 1a (4468 aa).

The region spanning 54 to 196 is the CoV Nsp1 globular domain; that stretch reads LVNHVRVNCS…PWSILLRKGG (143 aa). Positions 217-247 constitute a BetaCoV Nsp1 C-terminal domain; the sequence is FNVEDACEEVHLNPKGKYSCKAYALLKGYRG. The CoV Nsp2 N-terminal domain maps to 251 to 511; that stretch reads ILFVDQYGCD…TDAICRSLYM (261 aa). The Zn(2+) site is built by C390, C395, C411, and C414. Residues 390-414 form a C4 region; sequence CCGDTCDFRGWVAGNMMDGFPCPGC. The 189-residue stretch at 518–706 folds into the CoV Nsp2 middle domain; that stretch reads CGNLEQRAIL…VDKFKAFFKV (189 aa). A CoV Nsp2 C-terminal domain is found at 726 to 832; the sequence is SNRVCLAGSK…LDQCWRFPCA (107 aa). The Ubiquitin-like 1 domain maps to 834–946; it reads KKVEFNDKPK…MYCSFSAPDD (113 aa). The tract at residues 999-1027 is disordered; sequence SQEELAEPDAVGSQTPIASAEETEVGEAS. One can recognise a Peptidase C16 1 domain in the interval 1084–1333; sequence AFDAVCSEAL…VCFVKGDVIK (250 aa). C1121 (for PL1-PRO activity) is an active-site residue. Residues C1198, C1201, C1224, and C1226 each contribute to the Zn(2+) site. The segment at 1198–1226 adopts a C4-type 1 zinc-finger fold; the sequence is CLECDMELKLQGLDAMFFYGDVVSHMCKC. Catalysis depends on for PL1-PRO activity residues H1272 and D1283. One can recognise a Macro domain in the interval 1323 to 1482; it reads NVCFVKGDVI…VIEKCQVTSV (160 aa). In terms of domain architecture, DPUP spans 1537-1609; it reads DDARVFVQAN…VSQIRALLAN (73 aa). The Ubiquitin-like 2 domain occupies 1608–1663; that stretch reads ANKVDVLCTVDGVNFRSCCVAEGEVFGKTLGSVFCDGINVTKVRCSAIYKGKVFFQ. In terms of domain architecture, Peptidase C16 2 spans 1678 to 1937; that stretch reads AFGFDEPQLL…CVEYKPDLSQ (260 aa). C1716 (for PL2-PRO activity) is an active-site residue. C1794, C1796, C1828, and C1830 together coordinate Zn(2+). The C4-type 2 zinc-finger motif lies at 1794–1830; the sequence is CKCGVKQEQRKGVDAVMHFGTLDKGDLVRGYNIACTC. Active-site for PL2-PRO activity residues include H1873 and D1887. Residues 1951–2052 enclose the Nucleic acid-binding domain; that stretch reads IKAQFRTFEK…TYFNRPSVVC (102 aa). Residues 2107-2256 form the G2M domain; sequence QVVTEVRQEP…TDNKVIYTTE (150 aa). Residues 2225–2645 are HD1; the sequence is AIACYCAVKW…QSLYRPMLMV (421 aa). 2 helical membrane passes run 2286–2306 and 2314–2334; these read FFLV…NVIL and IGPL…TFGV. In terms of domain architecture, 3Ecto spans 2322 to 2383; sequence GQIVAWFKTT…AINVVQHVVD (62 aa). 2 disulfide bridges follow: C2338–C2362 and C2353–C2359. Transmembrane regions (helical) follow at residues 2400-2420 and 2442-2462; these read LVIG…LIGM and LFVF…YIVV. The tract at residues 2470-2560 is Y1; the sequence is CLCRHVMYGC…ELKRPVNPTD (91 aa). The CoV Nsp3 Y domain maps to 2470 to 2837; the sequence is CLCRHVMYGC…LTTPFSLKGG (368 aa). Zn(2+)-binding residues include H2474, C2479, C2484, C2487, C2520, H2523, C2527, and C2530. The interval 2474-2487 is ZF1; the sequence is HVMYGCSKPGCLFC. The segment at 2520 to 2530 is ZF2; sequence CTKHQWNCLNC. The Y2 stretch occupies residues 2561 to 2653; sequence SAYYSVTEVK…MVEKKLITTA (93 aa). Positions 2561–2837 are coV-Y; sequence SAYYSVTEVK…LTTPFSLKGG (277 aa). Residues 2625-2645 traverse the membrane as a helical segment; that stretch reads AGFLGAAVFYAQSLYRPMLMV. Residues 2654-2736 form a Y3 region; it reads NTGLSVSRTM…KSVMSAVNAG (83 aa). The interval 2737–2837 is Y4; sequence VDFTDESCNN…LTTPFSLKGG (101 aa). A run of 6 helical transmembrane segments spans residues 2847–2867, 3096–3116, 3118–3138, 3150–3170, 3177–3197, and 3202–3222; these read LFVA…TYAV, AFDL…FFAL, ASSV…YYLI, VVVI…VFQV, LYAC…SVVM, and LVMY…AVVV. Residues 2847–3222 form an HD2 region; sequence LFVANLICFI…FCIIYVAVVV (376 aa). Positions 3236 to 3333 constitute a Nsp4C domain; that stretch reads IGTEVRSDGT…TASVTTSFLQ (98 aa). The Peptidase C30 domain maps to 3334-3635; sequence SGIVKMVSPT…YQQLAGVKLQ (302 aa). Catalysis depends on for 3CL-PRO activity residues H3374 and C3478. Residues 3526 to 3860 form an HD3 region; it reads LPVQDYTQTV…VCCCYWGILS (335 aa). The next 7 helical transmembrane spans lie at 3644–3664, 3674–3694, 3699–3719, 3742–3762, 3769–3789, 3796–3816, and 3840–3860; these read GTCC…SAFV, THML…MLLI, LYLT…YLVV, TYMD…FVTM, VFSI…WYFG, VLLF…LSLA, and LVLL…GILS. The RdRp Nsp7 cofactor domain maps to 3922-4010; sequence SRLTDVKCAN…DYVRDNTVLQ (89 aa). Residues 4011-4207 form the RdRp Nsp8 cofactor domain; it reads ALQSEFVNMA…HNEVSTVVLQ (197 aa). A Nsp9 ssRNA-binding domain is found at 4208–4317; it reads NNELMPQKLR…GTLSSTVRLQ (110 aa). Residues 4318–4455 form the ExoN/MTase coactivator domain; sequence AGTATEYASN…CVGTGSQFQS (138 aa). Residues C4391, C4394, H4400, C4407, C4433, C4436, C4444, and C4446 each coordinate Zn(2+). 2 zinc fingers span residues 4391–4407 and 4433–4446; these read CIYC…DGLC and CQVC…SCSC.

This sequence belongs to the coronaviruses polyprotein 1ab family. 3CL-PRO exists as monomer and homodimer. Eight copies of nsp7 and eight copies of nsp8 assemble to form a heterohexadecamer. Nsp9 is a dimer. Nsp10 forms a dodecamer. Specific enzymatic cleavages in vivo by its own proteases yield mature proteins. 3CL-PRO and PL-PRO proteinases are autocatalytically processed.

Its subcellular location is the host membrane. The protein resides in the host cytoplasm. The protein localises to the host perinuclear region. The enzyme catalyses Thiol-dependent hydrolysis of ester, thioester, amide, peptide and isopeptide bonds formed by the C-terminal Gly of ubiquitin (a 76-residue protein attached to proteins as an intracellular targeting signal).. It carries out the reaction TSAVLQ-|-SGFRK-NH2 and SGVTFQ-|-GKFKK the two peptides corresponding to the two self-cleavage sites of the SARS 3C-like proteinase are the two most reactive peptide substrates. The enzyme exhibits a strong preference for substrates containing Gln at P1 position and Leu at P2 position.. The catalysed reaction is a 5'-end diphospho-ribonucleoside in mRNA + GTP + H(+) = a 5'-end (5'-triphosphoguanosine)-ribonucleoside in mRNA + diphosphate. In terms of biological role, the papain-like proteinase 1 (PL1-PRO) and papain-like proteinase 2 (PL2-PRO) are responsible for the cleavages located at the N-terminus of the replicase polyprotein. In addition, PLP2 possesses a deubiquitinating/deISGylating activity and processes both 'Lys-48'- and 'Lys-63'-linked polyubiquitin chains from cellular substrates. Antagonizes innate immune induction of type I interferon by blocking the phosphorylation, dimerization and subsequent nuclear translocation of host IRF-3. Its function is as follows. Responsible for the majority of cleavages as it cleaves the C-terminus of replicase polyprotein at 11 sites. Recognizes substrates containing the core sequence [ILMVF]-Q-|-[SGACN]. Inhibited by the substrate-analog Cbz-Val-Asn-Ser-Thr-Leu-Gln-CMK. Also contains an ADP-ribose-1''-phosphate (ADRP)-binding function. Nsp7-nsp8 hexadecamer may possibly confer processivity to the polymerase, maybe by binding to dsRNA or by producing primers utilized by the latter. Functionally, catalytic subunit of viral RNA capping enzyme which catalyzes the RNA guanylyltransferase reaction for genomic and sub-genomic RNAs. The kinase-like NiRAN domain of NSP12 transfers RNA to the amino terminus of NSP9, forming a covalent RNA-protein intermediate. Subsequently, the NiRAN domain transfers RNA to GDP, forming the core cap structure GpppA-RNA. The NSP14 and NSP16 methyltransferases then add methyl groups to form functional cap structures. In terms of biological role, binds to the 40S ribosomal subunit and inhibits host translation. The nsp1-40S ribosome complex further induces an endonucleolytic cleavage near the 5'UTR of host mRNAs, targeting them for degradation. By suppressing host gene expression, nsp1 facilitates efficient viral gene expression in infected cells and evasion from host immune response. The chain is Replicase polyprotein 1a from Murine coronavirus (strain A59) (MHV-A59).